A 355-amino-acid chain; its full sequence is Probable butyrate kinase (355 aa).

The protein belongs to the acetokinase family.

The protein localises to the cytoplasm. The enzyme catalyses butanoate + ATP = butanoyl phosphate + ADP. The protein is Probable butyrate kinase of Listeria innocua serovar 6a (strain ATCC BAA-680 / CLIP 11262).